Reading from the N-terminus, the 381-residue chain is Creatine kinase B-type (381 aa).

Position 4 is a phosphoserine (S4). Positions 11–98 (KLRFPAEDEF…FDPIIEDRHG (88 aa)) constitute a Phosphagen kinase N-terminal domain. T35 is modified (phosphothreonine). Residue K45 forms a Glycyl lysine isopeptide (Lys-Gly) (interchain with G-Cter in ubiquitin) linkage. V72 is a creatine binding site. The span at 96-110 (RHGGYKPSDEHKTDL) shows a compositional bias: basic and acidic residues. The segment at 96 to 123 (RHGGYKPSDEHKTDLNPDNLQGGDDLDP) is disordered. Residues K101 and K107 each participate in a glycyl lysine isopeptide (Lys-Gly) (interchain with G-Cter in ubiquitin) cross-link. At Y125 the chain carries Phosphotyrosine. In terms of domain architecture, Phosphagen kinase C-terminal spans 125–367 (YVLSSRVRTG…KLLIEMEQRL (243 aa)). ATP-binding positions include 128-132 (SSRVR), R130, R132, and H191. The tract at residues 130 to 138 (RVRTGRSIR) is internal MTS-like signal. S199 carries the post-translational modification Phosphoserine. Residue E232 coordinates creatine. R236 lines the ATP pocket. Position 269 is a 3'-nitrotyrosine (Y269). S285 serves as a coordination point for creatine. ATP is bound by residues R292, 292-296 (RAGVH), R320, 320-325 (RGTGGV), and D335. T322 carries the phosphothreonine modification. K381 participates in a covalent cross-link: Glycyl lysine isopeptide (Lys-Gly) (interchain with G-Cter in ubiquitin).

The protein belongs to the ATP:guanido phosphotransferase family. In terms of assembly, dimer of identical or non-identical chains, which can be either B (brain type) or M (muscle type). With MM being the major form in skeletal muscle and myocardium, MB existing in myocardium, and BB existing in many tissues, especially brain. Interacts with SLC12A6 (via C-terminus); the interaction may be required for SLC12A6 potassium-chloride cotransport activity. Ubiquitinated by the ECS(ASB9) complex, leading to its degradation by the proteasome.

Its subcellular location is the cytoplasm. It is found in the cytosol. The protein localises to the mitochondrion. The protein resides in the cell membrane. The enzyme catalyses creatine + ATP = N-phosphocreatine + ADP + H(+). Functionally, reversibly catalyzes the transfer of phosphate between ATP and various phosphogens (e.g. creatine phosphate). Creatine kinase isoenzymes play a central role in energy transduction in tissues with large, fluctuating energy demands, such as skeletal muscle, heart, brain and spermatozoa. Acts as a key regulator of adaptive thermogenesis as part of the futile creatine cycle: localizes to the mitochondria of thermogenic fat cells and acts by mediating phosphorylation of creatine to initiate a futile cycle of creatine phosphorylation and dephosphorylation. During the futile creatine cycle, creatine and N-phosphocreatine are in a futile cycle, which dissipates the high energy charge of N-phosphocreatine as heat without performing any mechanical or chemical work. This is Creatine kinase B-type (CKB) from Sus scrofa (Pig).